Consider the following 548-residue polypeptide: Cleavage and polyadenylation specificity factor subunit 6 (548 aa).

Residues 81 to 161 (IALYIGNLTW…QKPIVTPCNK (81 aa)) form the RRM domain. The span at 169 to 180 (MQSRKTATQAGQ) shows a compositional bias: polar residues. 2 disordered regions span residues 169 to 401 (MQSR…MDVV) and 473 to 548 (LHGI…YRHR). Composition is skewed to pro residues over residues 221-279 (PAGP…PPVM), 294-362 (PPGP…PPPG), and 373-384 (GPPPSDPYGRPP). Basic and acidic residues-rich tracts occupy residues 385 to 400 (PYER…DMDV) and 490 to 500 (RSRERDHSRSR). The segment covering 501 to 511 (EKSRRHKSRSR) has biased composition (basic residues). Residues 512 to 548 (DRHDDYYRERSRERERHRDRERDRDRERDREREYRHR) show a composition bias toward basic and acidic residues.

Belongs to the RRM CPSF6/7 family. In terms of assembly, component of the cleavage factor Im (CFIm) complex.

It localises to the nucleus. The protein localises to the nucleoplasm. The protein resides in the nucleus speckle. Its subcellular location is the cytoplasm. In terms of biological role, component of the cleavage factor Im (CFIm) complex that functions as an activator of the pre-mRNA 3'-end cleavage and polyadenylation processing required for the maturation of pre-mRNA into functional mRNAs. CFIm contributes to the recruitment of multiprotein complexes on specific sequences on the pre-mRNA 3'-end, so called cleavage and polyadenylation signals (pA signals). Most pre-mRNAs contain multiple pA signals, resulting in alternative cleavage and polyadenylation (APA) producing mRNAs with variable 3'-end formation. The CFIm complex acts as a key regulator of cleavage and polyadenylation site choice during APA through its binding to 5'-UGUA-3' elements localized in the 3'-untranslated region (UTR) for a huge number of pre-mRNAs. Plays a role in mRNA export. The chain is Cleavage and polyadenylation specificity factor subunit 6 from Xenopus laevis (African clawed frog).